The following is a 311-amino-acid chain: NAD kinase (311 aa).

Catalysis depends on Asp88, which acts as the Proton acceptor. Residues 88-89 (DG), 162-163 (NE), Arg190, Asp192, Val200, and 203-208 (TAHNLS) contribute to the NAD(+) site.

This sequence belongs to the NAD kinase family. It depends on a divalent metal cation as a cofactor.

The protein resides in the cytoplasm. It catalyses the reaction NAD(+) + ATP = ADP + NADP(+) + H(+). In terms of biological role, involved in the regulation of the intracellular balance of NAD and NADP, and is a key enzyme in the biosynthesis of NADP. Catalyzes specifically the phosphorylation on 2'-hydroxyl of the adenosine moiety of NAD to yield NADP. This is NAD kinase from Rhodopirellula baltica (strain DSM 10527 / NCIMB 13988 / SH1).